Here is a 367-residue protein sequence, read N- to C-terminus: Mitogen-activated protein kinase 12 (367 aa).

One can recognise a Protein kinase domain in the interval 27–311 (YQDLQPVGSG…AAEALAHPYF (285 aa)). ATP-binding positions include 33 to 41 (VGSGAYGAV) and Lys56. Catalysis depends on Asp153, which acts as the Proton acceptor. At Thr183 the chain carries Phosphothreonine; by MAP2K3 and MAP2K6. The TXY motif lies at 183–185 (TGY). Tyr185 carries the phosphotyrosine; by MAP2K3 and MAP2K6 modification.

The protein belongs to the protein kinase superfamily. CMGC Ser/Thr protein kinase family. MAP kinase subfamily. In terms of assembly, monomer. Interacts with the PDZ domain of the syntrophin SNTA1. Interacts with LIN7C, SCRIB, SYNJ2BP and SH3BP5. Interacts with PTPN4; this interaction induces the activation of PTPN4 phosphatase activity. It depends on Mg(2+) as a cofactor. Post-translationally, dually phosphorylated on Thr-183 and Tyr-185 by MAP2K3/MKK3 and MAP2K6/MKK6, which activates the enzyme. In terms of processing, ubiquitinated. Ubiquitination leads to degradation by the proteasome pathway. In terms of tissue distribution, highly expressed in skeletal muscle, lung and testes and also in the heart and thymus of both adult and neonatal rats.

Its subcellular location is the cytoplasm. It localises to the nucleus. The protein localises to the mitochondrion. It carries out the reaction L-seryl-[protein] + ATP = O-phospho-L-seryl-[protein] + ADP + H(+). The catalysed reaction is L-threonyl-[protein] + ATP = O-phospho-L-threonyl-[protein] + ADP + H(+). With respect to regulation, activated by phosphorylation on threonine and tyrosine. MAP2K3/MKK3 and MAP2K6/MKK6 are both essential for the activation of MAPK12 induced by environmental stress, whereas MAP2K6/MKK6 is the major MAPK12 activator in response to TNF-alpha. Functionally, serine/threonine kinase which acts as an essential component of the MAP kinase signal transduction pathway. MAPK12 is one of the four p38 MAPKs which play an important role in the cascades of cellular responses evoked by extracellular stimuli such as pro-inflammatory cytokines or physical stress leading to direct activation of transcription factors such as ELK1 and ATF2. Accordingly, p38 MAPKs phosphorylate a broad range of proteins and it has been estimated that they may have approximately 200 to 300 substrates each. Some of the targets are downstream kinases such as MAPKAPK2, which are activated through phosphorylation and further phosphorylate additional targets. Plays a role in myoblast differentiation and also in the down-regulation of cyclin D1 in response to hypoxia in adrenal cells suggesting MAPK12 may inhibit cell proliferation while promoting differentiation. Phosphorylates DLG1. Following osmotic shock, MAPK12 in the cell nucleus increases its association with nuclear DLG1, thereby causing dissociation of DLG1-SFPQ complexes. This function is independent of its catalytic activity and could affect mRNA processing and/or gene transcription to aid cell adaptation to osmolarity changes in the environment. Regulates UV-induced checkpoint signaling and repair of UV-induced DNA damage and G2 arrest after gamma-radiation exposure. MAPK12 is involved in the regulation of SLC2A1 expression and basal glucose uptake in L6 myotubes; and negatively regulates SLC2A4 expression and contraction-mediated glucose uptake in adult skeletal muscle. C-Jun (JUN) phosphorylation is stimulated by MAPK14 and inhibited by MAPK12, leading to a distinct AP-1 regulation. MAPK12 is required for the normal kinetochore localization of PLK1, prevents chromosomal instability and supports mitotic cell viability. MAPK12-signaling is also positively regulating the expansion of transient amplifying myogenic precursor cells during muscle growth and regeneration. This Rattus norvegicus (Rat) protein is Mitogen-activated protein kinase 12 (Mapk12).